Reading from the N-terminus, the 244-residue chain is Ribonuclease HII (244 aa).

The 214-residue stretch at 23-236 (KIILGLDEAG…SKKLLKEFEE (214 aa)) folds into the RNase H type-2 domain. A divalent metal cation is bound by residues D29, E30, and D130.

The protein belongs to the RNase HII family. Mn(2+) is required as a cofactor. It depends on Mg(2+) as a cofactor.

It is found in the cytoplasm. It carries out the reaction Endonucleolytic cleavage to 5'-phosphomonoester.. In terms of biological role, endonuclease that specifically degrades the RNA of RNA-DNA hybrids. In Methanococcus vannielii (strain ATCC 35089 / DSM 1224 / JCM 13029 / OCM 148 / SB), this protein is Ribonuclease HII.